We begin with the raw amino-acid sequence, 274 residues long: Large ribosomal subunit protein uL2 (274 aa).

Disordered regions lie at residues 21–59 (KVGL…GGHK) and 223–274 (VAMN…QLKG). Over residues 32-42 (SLTSGKKSSGG) the composition is skewed to low complexity. Residues 45-59 (NHGRITTRHRGGGHK) show a composition bias toward basic residues. A compositionally biased stretch (basic and acidic residues) spans 263–274 (KSSDKYIKQLKG).

Belongs to the universal ribosomal protein uL2 family. As to quaternary structure, part of the 50S ribosomal subunit. Forms a bridge to the 30S subunit in the 70S ribosome.

One of the primary rRNA binding proteins. Required for association of the 30S and 50S subunits to form the 70S ribosome, for tRNA binding and peptide bond formation. It has been suggested to have peptidyltransferase activity; this is somewhat controversial. Makes several contacts with the 16S rRNA in the 70S ribosome. In Wolbachia sp. subsp. Drosophila simulans (strain wRi), this protein is Large ribosomal subunit protein uL2.